The sequence spans 108 residues: Trp operon repressor homolog (108 aa).

A DNA-binding region spans residues 59 to 82 (QRQISQLLGVGVATITRGSNELKS).

Belongs to the TrpR family. As to quaternary structure, homodimer.

The protein localises to the cytoplasm. Functionally, this protein is an aporepressor. When complexed with L-tryptophan it binds the operator region of the trp operon and prevents the initiation of transcription. This chain is Trp operon repressor homolog, found in Aliivibrio fischeri (strain MJ11) (Vibrio fischeri).